Consider the following 105-residue polypeptide: Replication restart protein PriB (105 aa).

Residues Met1–Asp102 form the SSB domain.

Belongs to the PriB family. Homodimer. Interacts with PriA and DnaT. Component of the replication restart primosome. Primosome assembly occurs via a 'hand-off' mechanism. PriA binds to replication forks, subsequently PriB then DnaT bind; DnaT then displaces ssDNA to generate the helicase loading substrate.

Involved in the restart of stalled replication forks, which reloads the replicative helicase on sites other than the origin of replication; the PriA-PriB pathway is the major replication restart pathway. During primosome assembly it facilitates complex formation between PriA and DnaT on DNA; stabilizes PriA on DNA. Stimulates the DNA unwinding activity of PriA helicase. The protein is Replication restart protein PriB of Photorhabdus laumondii subsp. laumondii (strain DSM 15139 / CIP 105565 / TT01) (Photorhabdus luminescens subsp. laumondii).